A 142-amino-acid polypeptide reads, in one-letter code: Hemoglobin subunit alpha (142 aa).

One can recognise a Globin domain in the interval 2-142 (VLSPTDKSNV…VSTVLTSKYR (141 aa)). S4 carries the phosphoserine modification. N6-succinyllysine is present on residues K8 and K12. The residue at position 17 (K17) is an N6-acetyllysine; alternate. N6-succinyllysine; alternate is present on K17. The residue at position 25 (Y25) is a Phosphotyrosine. K41 carries the post-translational modification N6-succinyllysine. Residue H59 participates in O2 binding. Heme b is bound at residue H88. S103 is modified (phosphoserine). T109 bears the Phosphothreonine mark. Phosphoserine is present on residues S125 and S132. Residues T135 and T138 each carry the phosphothreonine modification. Residue S139 is modified to Phosphoserine.

Belongs to the globin family. In terms of assembly, heterotetramer of two alpha chains and two beta chains. As to expression, red blood cells.

Functionally, involved in oxygen transport from the lung to the various peripheral tissues. In terms of biological role, hemopressin acts as an antagonist peptide of the cannabinoid receptor CNR1. Hemopressin-binding efficiently blocks cannabinoid receptor CNR1 and subsequent signaling. This chain is Hemoglobin subunit alpha (HBA), found in Balaenoptera acutorostrata (Common minke whale).